The following is a 677-amino-acid chain: UvrABC system protein B (677 aa).

The Helicase ATP-binding domain maps to 27-192; sequence ANLGQGVRDQ…QRNDFDFHRG (166 aa). 40–47 provides a ligand contact to ATP; the sequence is GVTGSGKT. The Beta-hairpin motif lies at 93-116; the sequence is YYDYYQPEAYVPASDTYIEKDSSI. Positions 432 to 594 constitute a Helicase C-terminal domain; the sequence is QVDDLLAECR…IEPRTIRKSL (163 aa). Residues 638–673 enclose the UVR domain; it reads AKHIQKLEREMREAAKELEFERAATLRDRIRLLRER.

The protein belongs to the UvrB family. In terms of assembly, forms a heterotetramer with UvrA during the search for lesions. Interacts with UvrC in an incision complex.

The protein localises to the cytoplasm. Its function is as follows. The UvrABC repair system catalyzes the recognition and processing of DNA lesions. A damage recognition complex composed of 2 UvrA and 2 UvrB subunits scans DNA for abnormalities. Upon binding of the UvrA(2)B(2) complex to a putative damaged site, the DNA wraps around one UvrB monomer. DNA wrap is dependent on ATP binding by UvrB and probably causes local melting of the DNA helix, facilitating insertion of UvrB beta-hairpin between the DNA strands. Then UvrB probes one DNA strand for the presence of a lesion. If a lesion is found the UvrA subunits dissociate and the UvrB-DNA preincision complex is formed. This complex is subsequently bound by UvrC and the second UvrB is released. If no lesion is found, the DNA wraps around the other UvrB subunit that will check the other stand for damage. In Nitratidesulfovibrio vulgaris (strain DP4) (Desulfovibrio vulgaris), this protein is UvrABC system protein B.